We begin with the raw amino-acid sequence, 431 residues long: Histidine--tRNA ligase (431 aa).

It belongs to the class-II aminoacyl-tRNA synthetase family. As to quaternary structure, homodimer.

The protein resides in the cytoplasm. It carries out the reaction tRNA(His) + L-histidine + ATP = L-histidyl-tRNA(His) + AMP + diphosphate + H(+). The polypeptide is Histidine--tRNA ligase (Limosilactobacillus fermentum (strain NBRC 3956 / LMG 18251) (Lactobacillus fermentum)).